Reading from the N-terminus, the 91-residue chain is Insertion element IS1 7 protein InsA (91 aa).

This sequence belongs to the IS1 elements InsA family.

Its function is as follows. Absolutely required for transposition of IS1. The protein is Insertion element IS1 7 protein InsA (insA7) of Escherichia coli (strain K12).